A 590-amino-acid polypeptide reads, in one-letter code: Ankyrin repeat domain-containing protein 13A (590 aa).

ANK repeat units lie at residues arginine 40–lysine 69 and glutamine 73–threonine 102. Serine 205 is modified (phosphoserine). 4 UIM domains span residues glutamate 483 to serine 502, threonine 519 to glycine 538, arginine 549 to tryptophan 568, and glutamate 574 to lysine 590. The residue at position 586 (serine 586) is a Phosphoserine.

Interacts (via the UIM 3 and 4 repeats) with EGFR (ubiquitinated); the interaction is direct, inhibited by ANKRD13A monoubiquitination and may regulate EGFR internalization. Post-translationally, monoubiquitinated, inhibits interaction with ubiquitinated EGFR.

Its subcellular location is the cell membrane. The protein resides in the late endosome. Functionally, ubiquitin-binding protein that specifically recognizes and binds 'Lys-63'-linked ubiquitin. Does not bind 'Lys-48'-linked ubiquitin. Positively regulates the internalization of ligand-activated EGFR by binding to the Ub moiety of ubiquitinated EGFR at the cell membrane. This chain is Ankyrin repeat domain-containing protein 13A (ANKRD13A), found in Homo sapiens (Human).